A 610-amino-acid chain; its full sequence is Replication factor C large subunit (610 aa).

Glycine 55–threonine 62 is a binding site for ATP. Basic and acidic residues-rich tracts occupy residues glutamate 467–glutamate 478, leucine 502–glutamate 515, and aspartate 594–asparagine 603. A disordered region spans residues glutamate 467–phenylalanine 610.

Belongs to the activator 1 small subunits family. RfcL subfamily. As to quaternary structure, heteromultimer composed of small subunits (RfcS) and large subunits (RfcL).

Functionally, part of the RFC clamp loader complex which loads the PCNA sliding clamp onto DNA. This chain is Replication factor C large subunit, found in Methanosarcina mazei (strain ATCC BAA-159 / DSM 3647 / Goe1 / Go1 / JCM 11833 / OCM 88) (Methanosarcina frisia).